A 221-amino-acid polypeptide reads, in one-letter code: Putative hemin import ATP-binding protein HrtA (221 aa).

The ABC transporter domain occupies 3-221; sequence LVVEDIVKNF…IELEDGKITD (219 aa). ATP is bound at residue 39-46; that stretch reads GASGSGKT.

It belongs to the ABC transporter superfamily. HrtA family. In terms of assembly, the complex is composed of two ATP-binding proteins (HrtA), two transmembrane proteins (HrtB) and a solute-binding protein.

The protein resides in the cell membrane. In terms of biological role, part of the ABC transporter complex hrt involved in hemin import. Responsible for energy coupling to the transport system. This is Putative hemin import ATP-binding protein HrtA (hrtA) from Staphylococcus aureus (strain bovine RF122 / ET3-1).